Here is a 101-residue protein sequence, read N- to C-terminus: Integration host factor subunit alpha (101 aa).

This sequence belongs to the bacterial histone-like protein family. In terms of assembly, heterodimer of an alpha and a beta chain.

Functionally, this protein is one of the two subunits of integration host factor, a specific DNA-binding protein that functions in genetic recombination as well as in transcriptional and translational control. The protein is Integration host factor subunit alpha of Saccharophagus degradans (strain 2-40 / ATCC 43961 / DSM 17024).